Consider the following 151-residue polypeptide: Sigma factor binding protein 1, chloroplastic (151 aa).

Low complexity predominate over residues 1–13; that stretch reads MESSSSTFLTTTS. 2 disordered regions span residues 1 to 41 and 66 to 93; these read MESS…KPIK and TGQD…PPAE. A chloroplast-targeting transit peptide spans 1–54; sequence MESSSSTFLTTTSLDKKKPSPVSRKSPKQKKKTTSTNKPIKVRYISNPMRVQTC. The Bipartite nuclear localization signal signature appears at 16 to 32; that stretch reads KKKPSPVSRKSPKQKKK. The VQ signature appears at 58–67; the sequence is FRELVQELTG.

Interacts with the sigma factor SIGA in chloroplast. Interacts with WRKY25 and WRKY33 in the nucleus. Expressed in leaves and roots, but not in flowers.

Its subcellular location is the plastid. The protein localises to the chloroplast. It is found in the nucleus. In terms of biological role, contributes to plant defense. May regulate chloroplast metabolism upon infection with pathogens such as Pseudomonas syringae. Functions as activator of WRKY33 in plant defense against necrotrophic pathogens by stimulating the DNA-binding activity of WRKY33. The protein is Sigma factor binding protein 1, chloroplastic (SIB1) of Arabidopsis thaliana (Mouse-ear cress).